Consider the following 276-residue polypeptide: D-aminoacyl-tRNA deacylase (276 aa).

Belongs to the DtdA deacylase family. Monomer. Requires Zn(2+) as cofactor.

The enzyme catalyses a D-aminoacyl-tRNA + H2O = a tRNA + a D-alpha-amino acid + H(+). It carries out the reaction glycyl-tRNA(Ala) + H2O = tRNA(Ala) + glycine + H(+). Functionally, D-aminoacyl-tRNA deacylase with broad substrate specificity. By recycling D-aminoacyl-tRNA to D-amino acids and free tRNA molecules, this enzyme counteracts the toxicity associated with the formation of D-aminoacyl-tRNA entities in vivo. This chain is D-aminoacyl-tRNA deacylase, found in Staphylothermus marinus (strain ATCC 43588 / DSM 3639 / JCM 9404 / F1).